Here is a 75-residue protein sequence, read N- to C-terminus: Large ribosomal subunit protein bL31 (75 aa).

Part of the 50S ribosomal subunit.

Its function is as follows. Binds the 23S rRNA. The sequence is that of Large ribosomal subunit protein bL31 from Rhodopseudomonas palustris (strain ATCC BAA-98 / CGA009).